The sequence spans 169 residues: Secretory-abundant heat soluble protein 1 (169 aa).

The N-terminal stretch at 1 to 19 (MSRAAVAIALLGCVVAAYG) is a signal peptide. An SAHS-c1 region spans residues 31-60 (EWTGKSWMGKWESTDRIENFDAFISALGLP). Residues 75 to 103 (WKEGDHYHHQISVPDKNYKNDVNFKLNEE) are SAHS-c2. Asparagine 109 carries N-linked (GlcNAc...) asparagine glycosylation. Residues 116–165 (KYTEDGGNLKAEVHVPSRNKVIHDEYKVNGDELEKTYKVGDVTAKRWYKK) form an SAHS-c3 region.

This sequence belongs to the Secretory-abundant heat soluble protein (SAHS) family.

The protein localises to the secreted. In terms of biological role, secreted heat soluble protein acting as a molecular shield in water-deficient condition. Tardigrade-specific intrinsically disordered proteins (TDPs) are essential for desiccation tolerance by forming non-crystalline amorphous solids upon desiccation, and this vitrified state mirrors their protective capabilities. This Ramazzottius varieornatus (Water bear) protein is Secretory-abundant heat soluble protein 1.